The primary structure comprises 360 residues: Photosystem II protein D1 (360 aa).

3 helical membrane-spanning segments follow: residues 29–46 (YIGW…TATS), 118–133 (HFLL…EWEF), and 142–156 (WISV…AASA). His-118 serves as a coordination point for chlorophyll a. Residue Tyr-126 coordinates pheophytin a. [CaMn4O5] cluster-binding residues include Asp-170 and Glu-189. A helical transmembrane segment spans residues 197-218 (LHQLGVAGVFGGSLFSAMHGSL). Residue His-198 participates in chlorophyll a binding. A quinone-binding positions include His-215 and 264–265 (SF). Residue His-215 coordinates Fe cation. Residue His-272 coordinates Fe cation. Residues 274-288 (FLGLWPVVGIWFTSM) traverse the membrane as a helical segment. His-332, Glu-333, Asp-342, and Ala-344 together coordinate [CaMn4O5] cluster. The propeptide occupies 345-360 (SNESLPLALVAPAING).

Belongs to the reaction center PufL/M/PsbA/D family. PSII is composed of 1 copy each of membrane proteins PsbA, PsbB, PsbC, PsbD, PsbE, PsbF, PsbH, PsbI, PsbJ, PsbK, PsbL, PsbM, PsbT, PsbX, PsbY, PsbZ, Psb30/Ycf12, at least 3 peripheral proteins of the oxygen-evolving complex and a large number of cofactors. It forms dimeric complexes. The D1/D2 heterodimer binds P680, chlorophylls that are the primary electron donor of PSII, and subsequent electron acceptors. It shares a non-heme iron and each subunit binds pheophytin, quinone, additional chlorophylls, carotenoids and lipids. D1 provides most of the ligands for the Mn4-Ca-O5 cluster of the oxygen-evolving complex (OEC). There is also a Cl(-1) ion associated with D1 and D2, which is required for oxygen evolution. The PSII complex binds additional chlorophylls, carotenoids and specific lipids. is required as a cofactor. In terms of processing, tyr-161 forms a radical intermediate that is referred to as redox-active TyrZ, YZ or Y-Z. Post-translationally, C-terminally processed by CTPA; processing is essential to allow assembly of the oxygen-evolving complex and thus photosynthetic growth.

It localises to the plastid. The protein localises to the chloroplast thylakoid membrane. It carries out the reaction 2 a plastoquinone + 4 hnu + 2 H2O = 2 a plastoquinol + O2. Its function is as follows. Photosystem II (PSII) is a light-driven water:plastoquinone oxidoreductase that uses light energy to abstract electrons from H(2)O, generating O(2) and a proton gradient subsequently used for ATP formation. It consists of a core antenna complex that captures photons, and an electron transfer chain that converts photonic excitation into a charge separation. The D1/D2 (PsbA/PsbD) reaction center heterodimer binds P680, the primary electron donor of PSII as well as several subsequent electron acceptors. This chain is Photosystem II protein D1, found in Antithamnion sp. (Red alga).